Consider the following 311-residue polypeptide: Glycosyltransferase 6 domain-containing protein 1 (311 aa).

Residues 1–5 are Cytoplasmic-facing; that stretch reads MKAKG. A helical; Signal-anchor for type II membrane protein membrane pass occupies residues 6 to 26; sequence RILLLTSCLFLLLLLLAKIHL. Topologically, residues 27 to 311 are lumenal; the sequence is RNHQEEELPL…KVAHYPTDDL (285 aa). The N-linked (GlcNAc...) asparagine glycan is linked to Asn77. Residues 85–90, 176–178, and 198–201 each bind substrate; these read FAVSSF, SVN, and HAWW. Glu266 serves as the catalytic Nucleophile.

It belongs to the glycosyltransferase 6 family. Mn(2+) is required as a cofactor.

The protein resides in the membrane. In Rattus norvegicus (Rat), this protein is Glycosyltransferase 6 domain-containing protein 1 (Glt6d1).